A 66-amino-acid chain; its full sequence is Large ribosomal subunit protein bL35 (66 aa).

This sequence belongs to the bacterial ribosomal protein bL35 family.

The sequence is that of Large ribosomal subunit protein bL35 from Brucella melitensis biotype 1 (strain ATCC 23456 / CCUG 17765 / NCTC 10094 / 16M).